The following is a 110-amino-acid chain: Cytochrome c6 (110 aa).

The first 25 residues, 1–25 (MKKTLSVLFTAFSFCVIGFTQVAFA), serve as a signal peptide directing secretion. Residues Cys39, Cys42, His43, and Met83 each coordinate heme c.

The protein belongs to the cytochrome c family. PetJ subfamily. In terms of assembly, monomer. Post-translationally, binds 1 heme c group covalently per subunit.

Its subcellular location is the plastid. It is found in the chloroplast thylakoid lumen. Functions as an electron carrier between membrane-bound cytochrome b6-f and photosystem I in oxygenic photosynthesis. This chain is Cytochrome c6 (petJ), found in Porphyra purpurea (Red seaweed).